The chain runs to 283 residues: NAD kinase (283 aa).

The active-site Proton acceptor is Asp-65. Residues 65 to 66, 139 to 140, Arg-150, Arg-167, Asp-169, 180 to 185, and Gln-239 each bind NAD(+); these read DG, ND, and TGYSVS.

The protein belongs to the NAD kinase family. A divalent metal cation is required as a cofactor.

Its subcellular location is the cytoplasm. The enzyme catalyses NAD(+) + ATP = ADP + NADP(+) + H(+). Its function is as follows. Involved in the regulation of the intracellular balance of NAD and NADP, and is a key enzyme in the biosynthesis of NADP. Catalyzes specifically the phosphorylation on 2'-hydroxyl of the adenosine moiety of NAD to yield NADP. This Nitratidesulfovibrio vulgaris (strain DSM 19637 / Miyazaki F) (Desulfovibrio vulgaris) protein is NAD kinase.